The following is a 204-amino-acid chain: FMN-dependent NADH:quinone oxidoreductase 1 (204 aa).

Residues Ser-14, 20–22 (SMS), and 99–102 (MYNF) each bind FMN.

Belongs to the azoreductase type 1 family. As to quaternary structure, homodimer. FMN serves as cofactor.

The catalysed reaction is 2 a quinone + NADH + H(+) = 2 a 1,4-benzosemiquinone + NAD(+). It catalyses the reaction N,N-dimethyl-1,4-phenylenediamine + anthranilate + 2 NAD(+) = 2-(4-dimethylaminophenyl)diazenylbenzoate + 2 NADH + 2 H(+). Quinone reductase that provides resistance to thiol-specific stress caused by electrophilic quinones. Its function is as follows. Also exhibits azoreductase activity. Catalyzes the reductive cleavage of the azo bond in aromatic azo compounds to the corresponding amines. This chain is FMN-dependent NADH:quinone oxidoreductase 1, found in Hahella chejuensis (strain KCTC 2396).